Here is a 371-residue protein sequence, read N- to C-terminus: Chaperone protein DnaJ (371 aa).

The region spanning 5-69 (DYYEVLGLSK…QKRAQYDQFG (65 aa)) is the J domain. A CR-type zinc finger spans residues 133–215 (GKELNVEIPV…CHGSGKVRKR (83 aa)). Zn(2+)-binding residues include C146, C149, C163, C166, C189, C192, C203, and C206. 4 CXXCXGXG motif repeats span residues 146 to 153 (CDTCKGSG), 163 to 170 (CKHCSGSG), 189 to 196 (CGHCSGTG), and 203 to 210 (CTTCHGSG).

The protein belongs to the DnaJ family. Homodimer. It depends on Zn(2+) as a cofactor.

It is found in the cytoplasm. Participates actively in the response to hyperosmotic and heat shock by preventing the aggregation of stress-denatured proteins and by disaggregating proteins, also in an autonomous, DnaK-independent fashion. Unfolded proteins bind initially to DnaJ; upon interaction with the DnaJ-bound protein, DnaK hydrolyzes its bound ATP, resulting in the formation of a stable complex. GrpE releases ADP from DnaK; ATP binding to DnaK triggers the release of the substrate protein, thus completing the reaction cycle. Several rounds of ATP-dependent interactions between DnaJ, DnaK and GrpE are required for fully efficient folding. Also involved, together with DnaK and GrpE, in the DNA replication of plasmids through activation of initiation proteins. In Bacillus cereus (strain ATCC 10987 / NRS 248), this protein is Chaperone protein DnaJ.